A 130-amino-acid polypeptide reads, in one-letter code: MSMQDPISDMLTRIRNGQAASKVSVKMPSSKQKVAIAAVLKAEGYVTEFVVAGDTKPELEVTLKYFEGKKVIDTIKRVSRPGLRIYKGANDLPKVMAGLGIAIISTSHGVMTDRAARKASIGGEIICYVS.

It belongs to the universal ribosomal protein uS8 family. As to quaternary structure, part of the 30S ribosomal subunit. Contacts proteins S5 and S12.

Its function is as follows. One of the primary rRNA binding proteins, it binds directly to 16S rRNA central domain where it helps coordinate assembly of the platform of the 30S subunit. The polypeptide is Small ribosomal subunit protein uS8 (Psychromonas ingrahamii (strain DSM 17664 / CCUG 51855 / 37)).